The sequence spans 131 residues: Fluoride-specific ion channel FluC 1 (131 aa).

Transmembrane regions (helical) follow at residues 38–58 (FPLSTLVINGVASLCAGIAMM), 69–89 (TVMMFVVGFLGGFSTFSTALN), and 108–128 (IATVAVPLICVAAGFGIALLA). Positions 79 and 82 each coordinate Na(+).

This sequence belongs to the fluoride channel Fluc/FEX (TC 1.A.43) family.

The protein resides in the cell membrane. The enzyme catalyses fluoride(in) = fluoride(out). Na(+) is not transported, but it plays an essential structural role and its presence is essential for fluoride channel function. Functionally, fluoride-specific ion channel. Important for reducing fluoride concentration in the cell, thus reducing its toxicity. The chain is Fluoride-specific ion channel FluC 1 from Bifidobacterium longum (strain NCC 2705).